The primary structure comprises 134 residues: Cytochrome c-550 (134 aa).

A Pyrrolidone carboxylic acid modification is found at Q1. Residues C15, C18, H19, and M100 each contribute to the heme c site.

Binds 1 heme c group covalently per subunit.

Electron donor for nitrous-oxide reductase. In Paracoccus pantotrophus (Thiosphaera pantotropha), this protein is Cytochrome c-550.